A 176-amino-acid chain; its full sequence is CDP-archaeol synthase (176 aa).

Transmembrane regions (helical) follow at residues 12 to 32 (FIYW…SPVL), 60 to 80 (GFYV…IILC), 85 to 105 (ILIG…GSFI), 118 to 138 (PIID…FLGI), and 141 to 161 (FISY…LHII).

The protein belongs to the CDP-archaeol synthase family. Mg(2+) is required as a cofactor.

It localises to the cell membrane. It carries out the reaction 2,3-bis-O-(geranylgeranyl)-sn-glycerol 1-phosphate + CTP + H(+) = CDP-2,3-bis-O-(geranylgeranyl)-sn-glycerol + diphosphate. The protein operates within membrane lipid metabolism; glycerophospholipid metabolism. Its function is as follows. Catalyzes the formation of CDP-2,3-bis-(O-geranylgeranyl)-sn-glycerol (CDP-archaeol) from 2,3-bis-(O-geranylgeranyl)-sn-glycerol 1-phosphate (DGGGP) and CTP. This reaction is the third ether-bond-formation step in the biosynthesis of archaeal membrane lipids. The chain is CDP-archaeol synthase from Staphylothermus marinus (strain ATCC 43588 / DSM 3639 / JCM 9404 / F1).